The primary structure comprises 92 residues: Promotilin (92 aa).

Residues 12-49 (RMQEKERNRGQKKSLGLQQRSEEVGSLDPTEAAEEEGK) form a disordered region.

This sequence belongs to the motilin family.

Its subcellular location is the secreted. In terms of biological role, plays an important role in the regulation of interdigestive gastrointestinal motility and indirectly causes rhythmic contraction of duodenal and colonic smooth muscle. This chain is Promotilin (MLN), found in Equus caballus (Horse).